The primary structure comprises 247 residues: Chymase (247 aa).

The signal sequence occupies residues 1 to 19 (MHLLTLHLLLLLLGSSTKA). Residues 20–21 (GE) constitute a propeptide, activation peptide. The 224-residue stretch at 22 to 245 (IIGGTECIPH…YRPWINKILR (224 aa)) folds into the Peptidase S1 domain. A disulfide bridge connects residues C51 and C67. H66 serves as the catalytic Charge relay system. N80 carries N-linked (GlcNAc...) asparagine glycosylation. D110 functions as the Charge relay system in the catalytic mechanism. Cystine bridges form between C144/C209 and C175/C188. S203 functions as the Charge relay system in the catalytic mechanism.

The protein belongs to the peptidase S1 family. Granzyme subfamily. As to expression, mast cells.

It localises to the secreted. The protein resides in the cytoplasmic granule. It catalyses the reaction Preferential cleavage: Phe-|-Xaa &gt; Tyr-|-Xaa &gt; Trp-|-Xaa &gt; Leu-|-Xaa.. Major secreted protease of mast cells with suspected roles in vasoactive peptide generation, extracellular matrix degradation, and regulation of gland secretion. This Mus musculus (Mouse) protein is Chymase (Cma1).